The following is a 130-amino-acid chain: MLFIYLIVTFFTKMDSVSRIKAFFIMLLTLADQPLTYKIKISQCNDMIINVPYNECFPIYDDCVFGSVLIFQKSDSSKYQVNLYPNINCDENGIIPSKIPYNESGLKITDPLAFYLMFLIIITILLIMIL.

An N-linked (GlcNAc...) asparagine glycan is attached at asparagine 102. Residues 110 to 130 (DPLAFYLMFLIIITILLIMIL) form a helical membrane-spanning segment.

It is found in the membrane. This is an uncharacterized protein from Dictyostelium discoideum (Social amoeba).